Consider the following 252-residue polypeptide: tRNA1(Val) (adenine(37)-N6)-methyltransferase (252 aa).

Belongs to the methyltransferase superfamily. tRNA (adenine-N(6)-)-methyltransferase family.

It localises to the cytoplasm. It catalyses the reaction adenosine(37) in tRNA1(Val) + S-adenosyl-L-methionine = N(6)-methyladenosine(37) in tRNA1(Val) + S-adenosyl-L-homocysteine + H(+). Specifically methylates the adenine in position 37 of tRNA(1)(Val) (anticodon cmo5UAC). In Yersinia pseudotuberculosis serotype O:3 (strain YPIII), this protein is tRNA1(Val) (adenine(37)-N6)-methyltransferase.